Reading from the N-terminus, the 161-residue chain is Protein-export protein SecB (161 aa).

It belongs to the SecB family. As to quaternary structure, homotetramer, a dimer of dimers. One homotetramer interacts with 1 SecA dimer.

It localises to the cytoplasm. Functionally, one of the proteins required for the normal export of preproteins out of the cell cytoplasm. It is a molecular chaperone that binds to a subset of precursor proteins, maintaining them in a translocation-competent state. It also specifically binds to its receptor SecA. In Shewanella sp. (strain ANA-3), this protein is Protein-export protein SecB.